A 371-amino-acid chain; its full sequence is Macronuclear solute carrier homolog CR-MSC (371 aa).

Solcar repeat units lie at residues 16–111 (RMNY…FYDK), 120–208 (ARPD…CKEN), and 215–304 (PHWI…LSQF). A run of 6 helical transmembrane segments spans residues 22 to 42 (FAAANVIALITHAATQPLDMV), 89 to 109 (TFFFRTVCYTTARVTAFGYFY), 126 to 146 (VAAGVLGGFIAGVVTNPIDIV), 184 to 204 (AGANGFKLAAICSSMTNIYDW), 221 to 241 (LWGTAVAVAIGTVVSMPFDMI), and 281 to 301 (FGSFYAGGEAYFLRLFLICYL).

This sequence belongs to the mitochondrial carrier (TC 2.A.29) family.

It localises to the membrane. This chain is Macronuclear solute carrier homolog CR-MSC, found in Oxytricha fallax.